The primary structure comprises 854 residues: Envelope glycoprotein gp160 (854 aa).

A signal peptide spans 1–31; that stretch reads MKVMEKKKRDWNSLSIITIITIILLTPCLTS. At 32-675 the chain is on the extracellular side; the sequence is ELWVTVYYGV…ITKWLWYIKI (644 aa). Intrachain disulfides connect cysteine 53-cysteine 73, cysteine 118-cysteine 203, cysteine 125-cysteine 194, cysteine 130-cysteine 155, cysteine 216-cysteine 245, and cysteine 226-cysteine 237. The interval 130–154 is V1; the sequence is CSKANFSQAKNLTNQTSSPPLEMKN. N-linked (GlcNAc...) asparagine; by host glycans are attached at residues asparagine 134, asparagine 140, asparagine 143, asparagine 154, asparagine 158, asparagine 186, and asparagine 195. Residues 155-194 are V2; that stretch reads CSFNVTTELRDKKKQVYSLFYVEDVVNLGNENNTYRIINC. Residues asparagine 239, asparagine 260, asparagine 267, asparagine 274, asparagine 299, asparagine 331, asparagine 336, asparagine 351, and asparagine 356 are each glycosylated (N-linked (GlcNAc...) asparagine; by host). The V3 stretch occupies residues 294-327; sequence CHRPGNNTRGEVQIGPGMTFYNIENVVGDTRSAY. A disulfide bond links cysteine 294 and cysteine 328. Positions 362–372 are CD4-binding loop; sequence ASGGDPEVTHH. 2 cysteine pairs are disulfide-bonded: cysteine 376/cysteine 429 and cysteine 383/cysteine 402. The interval 383 to 402 is V4; that stretch reads CNTSQIFTDNITNGIIILPC. N-linked (GlcNAc...) asparagine; by host glycans are attached at residues asparagine 384, asparagine 392, asparagine 426, asparagine 432, asparagine 446, and asparagine 450. V5 stretches follow at residues 445 to 456 and 447 to 456; these read TNNSGNLTFRPT and NSGNLTFRPT. A fusion peptide region spans residues 501-522; it reads AAFGLGALFLGFLGAAGSTMGA. The immunosuppression stretch occupies residues 564–582; sequence KQLQARLLAVERYLQDQQI. An intrachain disulfide couples cysteine 588 to cysteine 594. Residues asparagine 601, asparagine 608, asparagine 616, and asparagine 628 are each glycosylated (N-linked (GlcNAc...) asparagine; by host). A coiled-coil region spans residues 624–658; that stretch reads KLVSNYTGKIFGLLEEAQSQQEKNERDLLELDQWA. The interval 653–674 is MPER; binding to GalCer; the sequence is ELDQWASLWNWFDITKWLWYIK. The helical transmembrane segment at 676-696 threads the bilayer; it reads FLMAVGGIIGLRIIMTVFSVV. Residues 697–854 are Cytoplasmic-facing; sequence RRVRQGYSPL…IRQGLERALL (158 aa). The YXXL motif; contains endocytosis signal motif lies at 703–706; sequence YSPL. Positions 853-854 match the Di-leucine internalization motif motif; it reads LL.

Belongs to the HIV-1 env protein family. The mature envelope protein (Env) consists of a homotrimer of non-covalently associated gp120-gp41 heterodimers. The resulting complex protrudes from the virus surface as a spike. There seems to be as few as 10 spikes on the average virion. Interacts with host CD4, CCR5 and CXCR4. Gp120 also interacts with the C-type lectins CD209/DC-SIGN and CLEC4M/DC-SIGNR (collectively referred to as DC-SIGN(R)). Gp120 and gp41 interact with GalCer. Gp120 interacts with host ITGA4/ITGB7 complex; on CD4+ T-cells, this interaction results in rapid activation of integrin ITGAL/LFA-1, which facilitates efficient cell-to-cell spreading of HIV-1. Gp120 interacts with cell-associated heparan sulfate; this interaction increases virus infectivity on permissive cells and may be involved in infection of CD4- cells. As to quaternary structure, the mature envelope protein (Env) consists of a homotrimer of non-covalently associated gp120-gp41 heterodimers. The resulting complex protrudes from the virus surface as a spike. There seems to be as few as 10 spikes on the average virion. Highly glycosylated by host. The high number of glycan on the protein is reffered to as 'glycan shield' because it contributes to hide protein sequence from adaptive immune system. Post-translationally, palmitoylation of the transmembrane protein and of Env polyprotein (prior to its proteolytic cleavage) is essential for their association with host cell membrane lipid rafts. Palmitoylation is therefore required for envelope trafficking to classical lipid rafts, but not for viral replication. In terms of processing, specific enzymatic cleavages in vivo yield mature proteins. Envelope glycoproteins are synthesized as an inactive precursor that is heavily N-glycosylated and processed likely by host cell furin in the Golgi to yield the mature SU and TM proteins. The cleavage site between SU and TM requires the minimal sequence [KR]-X-[KR]-R. About 2 of the 9 disulfide bonds of gp41 are reduced by P4HB/PDI, following binding to CD4 receptor.

Its subcellular location is the virion membrane. It localises to the host cell membrane. It is found in the host endosome membrane. In terms of biological role, attaches the virus to the host lymphoid cell by binding to the primary receptor CD4. This interaction induces a structural rearrangement creating a high affinity binding site for a chemokine coreceptor like CXCR4 and/or CCR5. Acts as a ligand for CD209/DC-SIGN and CLEC4M/DC-SIGNR, which are respectively found on dendritic cells (DCs), and on endothelial cells of liver sinusoids and lymph node sinuses. These interactions allow capture of viral particles at mucosal surfaces by these cells and subsequent transmission to permissive cells. HIV subverts the migration properties of dendritic cells to gain access to CD4+ T-cells in lymph nodes. Virus transmission to permissive T-cells occurs either in trans (without DCs infection, through viral capture and transmission), or in cis (following DCs productive infection, through the usual CD4-gp120 interaction), thereby inducing a robust infection. In trans infection, bound virions remain infectious over days and it is proposed that they are not degraded, but protected in non-lysosomal acidic organelles within the DCs close to the cell membrane thus contributing to the viral infectious potential during DCs' migration from the periphery to the lymphoid tissues. On arrival at lymphoid tissues, intact virions recycle back to DCs' cell surface allowing virus transmission to CD4+ T-cells. Functionally, acts as a class I viral fusion protein. Under the current model, the protein has at least 3 conformational states: pre-fusion native state, pre-hairpin intermediate state, and post-fusion hairpin state. During fusion of viral and target intracellular membranes, the coiled coil regions (heptad repeats) assume a trimer-of-hairpins structure, positioning the fusion peptide in close proximity to the C-terminal region of the ectodomain. The formation of this structure appears to drive apposition and subsequent fusion of viral and target cell membranes. Complete fusion occurs in host cell endosomes and is dynamin-dependent, however some lipid transfer might occur at the plasma membrane. The virus undergoes clathrin-dependent internalization long before endosomal fusion, thus minimizing the surface exposure of conserved viral epitopes during fusion and reducing the efficacy of inhibitors targeting these epitopes. Membranes fusion leads to delivery of the nucleocapsid into the cytoplasm. Oligomerizes in the host endoplasmic reticulum into predominantly trimers. In a second time, gp160 transits in the host Golgi, where glycosylation is completed. The precursor is then proteolytically cleaved in the trans-Golgi and thereby activated by cellular furin or furin-like proteases to produce gp120 and gp41. This is Envelope glycoprotein gp160 from Pan (chimpanzees).